The following is a 363-amino-acid chain: MTKQTIRVELTSTKKPKPDPNQLSFGRVFTDHMFVMDYAADKGWYDPRIIPYQPLSMDPAAMVYHYGQTVFEGLKAYVSEDDHVLLFRPEKNMERLNQSNDRLCIPQIDEEQVLEGLKQLVAIDKDWIPNAEGTSLYIRPFIIATEPFLGVAASHTYKLLIILSPVGSYYKEGIKPVKIAVESEFVRAVKGGTGNAKTAGNYASSLKAQQVAEEKGFSQVLWLDGIEKKYIEEVGSMNIFFKINGEIVTPMLNGSILEGITRNSVIALLKHWGLQVSERKIAIDEVIQAHKDGILEEAFGTGTAAVISPVGELIWQDETLSINNGETGEIAKKLYDTITGIQKGAVADEFGWTTEVAALTESK.

K197 carries the post-translational modification N6-(pyridoxal phosphate)lysine.

Belongs to the class-IV pyridoxal-phosphate-dependent aminotransferase family. Requires pyridoxal 5'-phosphate as cofactor.

It carries out the reaction L-leucine + 2-oxoglutarate = 4-methyl-2-oxopentanoate + L-glutamate. The catalysed reaction is L-isoleucine + 2-oxoglutarate = (S)-3-methyl-2-oxopentanoate + L-glutamate. The enzyme catalyses L-valine + 2-oxoglutarate = 3-methyl-2-oxobutanoate + L-glutamate. It participates in amino-acid biosynthesis; L-isoleucine biosynthesis; L-isoleucine from 2-oxobutanoate: step 4/4. Its pathway is amino-acid biosynthesis; L-leucine biosynthesis; L-leucine from 3-methyl-2-oxobutanoate: step 4/4. It functions in the pathway amino-acid biosynthesis; L-valine biosynthesis; L-valine from pyruvate: step 4/4. Its activity is regulated as follows. Inhibited by canaline. Functionally, transaminates branched-chain amino acids and ketoglutarate. The protein is Branched-chain-amino-acid aminotransferase 2 (ilvK) of Bacillus subtilis (strain 168).